The chain runs to 180 residues: MARVVRPQKNHVDLDIYQSSYMVDYKPFGKYKYSRVTPQEQAKLDAQLQSKEFYQPKPNPNPKLEEGYPAFRRPYMTALDLGVPGFFPPQERVTTRKDDGRFTTTCHYAYPASLALYLAQQDPYWLHQRADFPCLMEPERQPAPEVGKGYLLLPGCLCDHHQRVKVPILNRWGPLMPFYQ.

As to quaternary structure, microtubule inner protein component of sperm flagellar doublet microtubules. In terms of tissue distribution, only detected after the mouse is 35 days old. Expression increases gradually from day 35 to 6 months, and remains stable after 54 days. Exclusively expressed in the epididymis and testis.

It localises to the nucleus. The protein resides in the cytoplasm. Its subcellular location is the cytoskeleton. The protein localises to the flagellum axoneme. Microtubule inner protein (MIP) part of the dynein-decorated doublet microtubules (DMTs) in flagella axoneme. This is Protein SPMIP9 (Spmip9) from Mus musculus (Mouse).